The primary structure comprises 329 residues: MPRRPLLEFEKPLVELEQQIEQIRQLARDSEVDVSQQLHQLESLAARRRQEIFQGLTPAQKIQVARHPHRPSTLDFIQMFCDDWIELHGDRRGNDDQALVGGVGRLGDQPVLLIGHQKGRDTKENVARNFGMATPGGYRKAMRLMEHADRFRLPILSFIDTPGAYAGLQAEEQGQGEAIAVNLREMFRLRVPVIATVIGEGGSGGALGIGVADRLLMFEHSVYTVASPEACASILWRDAAKAPDAATALRITGVDLLELGVVDEVLEEPSGGNNWAPLEAGQTLRAALERHLGELLALSERELKEGRYRKFRAMGRFVEGNSQNPGKID.

Positions 40–294 (QLESLAARRR…RAALERHLGE (255 aa)) constitute a CoA carboxyltransferase C-terminal domain.

The protein belongs to the AccA family. As to quaternary structure, acetyl-CoA carboxylase is a heterohexamer composed of biotin carboxyl carrier protein (AccB), biotin carboxylase (AccC) and two subunits each of ACCase subunit alpha (AccA) and ACCase subunit beta (AccD).

It is found in the cytoplasm. It catalyses the reaction N(6)-carboxybiotinyl-L-lysyl-[protein] + acetyl-CoA = N(6)-biotinyl-L-lysyl-[protein] + malonyl-CoA. It participates in lipid metabolism; malonyl-CoA biosynthesis; malonyl-CoA from acetyl-CoA: step 1/1. In terms of biological role, component of the acetyl coenzyme A carboxylase (ACC) complex. First, biotin carboxylase catalyzes the carboxylation of biotin on its carrier protein (BCCP) and then the CO(2) group is transferred by the carboxyltransferase to acetyl-CoA to form malonyl-CoA. The polypeptide is Acetyl-coenzyme A carboxylase carboxyl transferase subunit alpha (Parasynechococcus marenigrum (strain WH8102)).